The primary structure comprises 328 residues: MLFSNNKIHAEGKLALIVGASQGLGADLALKLYQQNCSVILVARTETKLVAQIERIQSSSPENNATLSYKCCDASNYEDCVKLWNDLIVDQKQDPDFIFCCAGSSIPKLFSDLTAKDFAIGINTNYTTSLNITHTGFKQVLGQFSDLSCDQYKKRHVIFVSSVVSFYPFIGYSQYAPLKSAIQSLSIILRQEMGPFNYRVSCVFPGNFQSEGYEEEQKTKPSITKSIEGSSKPISGEDCADIILNQLNRGYDTVTTDFIGWLLGCSVLGVLPRSWGFFQVIVSFIFSIIAPIANYVVYRDVLKFFKTRSTREVEEYEIVSTDDNKKTL.

An NADP(+)-binding site is contributed by Leu-16. NADPH is bound by residues Gly-19, Ser-21, and Gly-23. The short motif at 19-23 (GASQG) is the GXSXG element. Leu-24 is a binding site for NADP(+). Residues Arg-44, Lys-48, and Asp-73 each contribute to the NADPH site. NADP(+) is bound at residue Asp-73. The active-site Proton donor is Ser-161. Residues Tyr-175, Lys-179, and Ser-210 each contribute to the NADP(+) site. Tyr-175 serves as the catalytic Proton acceptor. The active-site Lowers pKa of active site Tyr is the Lys-179. The helical transmembrane segment at 277 to 297 (FFQVIVSFIFSIIAPIANYVV) threads the bilayer.

It belongs to the short-chain dehydrogenases/reductases (SDR) family.

The protein resides in the endoplasmic reticulum membrane. It catalyses the reaction sphinganine + NADP(+) = 3-oxosphinganine + NADPH + H(+). It participates in lipid metabolism; sphingolipid metabolism. Catalyzes the reduction of 3'-oxosphinganine (3-ketodihydrosphingosine/KDS) to sphinganine (dihydrosphingosine/DHS), the second step of de novo sphingolipid biosynthesis. This is 3-ketodihydrosphingosine reductase TSC10 (TSC10) from Debaryomyces hansenii (strain ATCC 36239 / CBS 767 / BCRC 21394 / JCM 1990 / NBRC 0083 / IGC 2968) (Yeast).